Here is a 443-residue protein sequence, read N- to C-terminus: Glutamate--tRNA ligase 1 (443 aa).

A 'HIGH' region motif is present at residues 8 to 18 (PSPTGRLHVGN). A 'KMSKS' region motif is present at residues 239–243 (KLSKR). Residue lysine 242 participates in ATP binding.

It belongs to the class-I aminoacyl-tRNA synthetase family. Glutamate--tRNA ligase type 1 subfamily. In terms of assembly, monomer.

The protein resides in the cytoplasm. It carries out the reaction tRNA(Glu) + L-glutamate + ATP = L-glutamyl-tRNA(Glu) + AMP + diphosphate. In terms of biological role, catalyzes the attachment of glutamate to tRNA(Glu) in a two-step reaction: glutamate is first activated by ATP to form Glu-AMP and then transferred to the acceptor end of tRNA(Glu). The chain is Glutamate--tRNA ligase 1 from Rhizorhabdus wittichii (strain DSM 6014 / CCUG 31198 / JCM 15750 / NBRC 105917 / EY 4224 / RW1) (Sphingomonas wittichii).